The sequence spans 61 residues: Small ribosomal subunit protein uS14 (61 aa).

Residues cysteine 24, cysteine 27, cysteine 40, and cysteine 43 each contribute to the Zn(2+) site.

The protein belongs to the universal ribosomal protein uS14 family. Zinc-binding uS14 subfamily. Part of the 30S ribosomal subunit. Contacts proteins S3 and S10. It depends on Zn(2+) as a cofactor.

Binds 16S rRNA, required for the assembly of 30S particles and may also be responsible for determining the conformation of the 16S rRNA at the A site. The sequence is that of Small ribosomal subunit protein uS14 from Coprothermobacter proteolyticus (strain ATCC 35245 / DSM 5265 / OCM 4 / BT).